Consider the following 567-residue polypeptide: TGF-beta receptor type-2 (567 aa).

A signal peptide spans 1–23 (MGRGLLRGLWPLHIVLWTRIAST). The Extracellular portion of the chain corresponds to 24 to 166 (IPPHVPKSVN…SPDLLLVIIQ (143 aa)). Intrachain disulfides connect C51–C84, C54–C71, C61–C67, C77–C101, C121–C136, and C138–C143. N-linked (GlcNAc...) asparagine glycans are attached at residues N70 and N94. A helical transmembrane segment spans residues 167–187 (VTGVSLLPPLGIAIAVIAIFY). Over 188–567 (CYRVHRQQKL…PEDGSLNTTK (380 aa)) the chain is Cytoplasmic. Residues 244–546 (IELDTLVGKG…RFSELEHPDR (303 aa)) form the Protein kinase domain. ATP is bound by residues 250–258 (VGKGRFAEV) and K277. The active-site Proton acceptor is D379. Phosphoserine occurs at positions 409, 548, and 553. Residues 546 to 567 (RLSGRSCSQEKIPEDGSLNTTK) are disordered.

Belongs to the protein kinase superfamily. TKL Ser/Thr protein kinase family. TGFB receptor subfamily. In terms of assembly, homodimer. Heterohexamer; TGFB1, TGFB2 and TGFB3 homodimeric ligands assemble a functional receptor composed of two TGFBR1 and TGFBR2 heterodimers to form a ligand-receptor heterohexamer. The respective affinity of TGFRB1 and TGFRB2 for the ligands may modulate the kinetics of assembly of the receptor and may explain the different biological activities of TGFB1, TGFB2 and TGFB3. Component of a complex composed of TSC22D1 (via N-terminus), TGFBR1 and TGFBR2; the interaction between TSC22D1 and TGFBR1 is inhibited by SMAD7 and promoted by TGFB1. Interacts with DAXX. Interacts with DYNLT4. Interacts with ZFYVE9; ZFYVE9 recruits SMAD2 and SMAD3 to the TGF-beta receptor. Interacts with and is activated by SCUBE3; this interaction does not affect TGFB1-binding to TGFBR2. Interacts with VPS39; this interaction is independent of the receptor kinase activity and of the presence of TGF-beta. Interacts with CLU. Requires Mg(2+) as cofactor. Mn(2+) serves as cofactor. In terms of processing, phosphorylated on a Ser/Thr residue in the cytoplasmic domain.

The protein localises to the cell membrane. It is found in the membrane raft. The catalysed reaction is L-threonyl-[receptor-protein] + ATP = O-phospho-L-threonyl-[receptor-protein] + ADP + H(+). The enzyme catalyses L-seryl-[receptor-protein] + ATP = O-phospho-L-seryl-[receptor-protein] + ADP + H(+). Functionally, transmembrane serine/threonine kinase forming with the TGF-beta type I serine/threonine kinase receptor, TGFBR1, the non-promiscuous receptor for the TGF-beta cytokines TGFB1, TGFB2 and TGFB3. Transduces the TGFB1, TGFB2 and TGFB3 signal from the cell surface to the cytoplasm and is thus regulating a plethora of physiological and pathological processes including cell cycle arrest in epithelial and hematopoietic cells, control of mesenchymal cell proliferation and differentiation, wound healing, extracellular matrix production, immunosuppression and carcinogenesis. The formation of the receptor complex composed of 2 TGFBR1 and 2 TGFBR2 molecules symmetrically bound to the cytokine dimer results in the phosphorylation and the activation of TGFRB1 by the constitutively active TGFBR2. Activated TGFBR1 phosphorylates SMAD2 which dissociates from the receptor and interacts with SMAD4. The SMAD2-SMAD4 complex is subsequently translocated to the nucleus where it modulates the transcription of the TGF-beta-regulated genes. This constitutes the canonical SMAD-dependent TGF-beta signaling cascade. Also involved in non-canonical, SMAD-independent TGF-beta signaling pathways. The polypeptide is TGF-beta receptor type-2 (Tgfbr2) (Rattus norvegicus (Rat)).